Consider the following 193-residue polypeptide: Ribosomal RNA small subunit methyltransferase G (193 aa).

Residues Gly-64, Leu-69, 113 to 114 (IE), and Arg-126 each bind S-adenosyl-L-methionine.

Belongs to the methyltransferase superfamily. RNA methyltransferase RsmG family.

It is found in the cytoplasm. The catalysed reaction is guanosine(527) in 16S rRNA + S-adenosyl-L-methionine = N(7)-methylguanosine(527) in 16S rRNA + S-adenosyl-L-homocysteine. In terms of biological role, specifically methylates the N7 position of guanine in position 527 of 16S rRNA. The protein is Ribosomal RNA small subunit methyltransferase G of Rickettsia massiliae (strain Mtu5).